The chain runs to 403 residues: 8-amino-7-oxononanoate synthase (403 aa).

Arginine 22 is a binding site for substrate. 109 to 110 (GF) lines the pyridoxal 5'-phosphate pocket. Residue histidine 134 coordinates substrate. Serine 178, histidine 206, and threonine 232 together coordinate pyridoxal 5'-phosphate. Lysine 235 carries the N6-(pyridoxal phosphate)lysine modification. Threonine 348 provides a ligand contact to substrate. A disordered region spans residues 383-403 (SNDSGSKPSIESSFELKKEAQ). The segment covering 385–394 (DSGSKPSIES) has biased composition (polar residues).

The protein belongs to the class-II pyridoxal-phosphate-dependent aminotransferase family. BioF subfamily. Homodimer. It depends on pyridoxal 5'-phosphate as a cofactor.

The catalysed reaction is 6-carboxyhexanoyl-[ACP] + L-alanine + H(+) = (8S)-8-amino-7-oxononanoate + holo-[ACP] + CO2. Its pathway is cofactor biosynthesis; biotin biosynthesis. Catalyzes the decarboxylative condensation of pimeloyl-[acyl-carrier protein] and L-alanine to produce 8-amino-7-oxononanoate (AON), [acyl-carrier protein], and carbon dioxide. This is 8-amino-7-oxononanoate synthase from Vibrio atlanticus (strain LGP32) (Vibrio splendidus (strain Mel32)).